The primary structure comprises 310 residues: 4-hydroxyproline epimerase (310 aa).

Cysteine 88 serves as the catalytic Proton acceptor. Residues 89–90 (GH), histidine 208, and aspartate 232 contribute to the substrate site. The Proton donor role is filled by cysteine 236. 237 to 238 (GT) lines the substrate pocket.

It belongs to the proline racemase family. Homodimer.

It carries out the reaction trans-4-hydroxy-L-proline = cis-4-hydroxy-D-proline. Functionally, allows intracellular utilization of 4-hydroxyproline, one of the major constituents of host collagen, by converting 4-hydroxy-L-proline to 4-hydroxy-D-proline, which can be further metabolized by intracellular 4-hydroxy-D-proline oxidases. This is 4-hydroxyproline epimerase from Burkholderia cenocepacia (strain HI2424).